Reading from the N-terminus, the 148-residue chain is Glutamyl-tRNA(Gln) amidotransferase subunit C, mitochondrial (148 aa).

This sequence belongs to the GatC family. Subunit of the heterotrimeric GatCAB amidotransferase (AdT) complex, composed of A, B and C subunits.

The protein resides in the mitochondrion. The enzyme catalyses L-glutamyl-tRNA(Gln) + L-glutamine + ATP + H2O = L-glutaminyl-tRNA(Gln) + L-glutamate + ADP + phosphate + H(+). Its function is as follows. Allows the formation of correctly charged Gln-tRNA(Gln) through the transamidation of misacylated Glu-tRNA(Gln) in the mitochondria. The reaction takes place in the presence of glutamine and ATP through an activated gamma-phospho-Glu-tRNA(Gln). The polypeptide is Glutamyl-tRNA(Gln) amidotransferase subunit C, mitochondrial (Drosophila sechellia (Fruit fly)).